The chain runs to 53 residues: Serine rich endogenous peptide 3 (53 aa).

Residues 1–26 form the signal peptide; that stretch reads MTKKGPLNLRLLLLLLVVLLPSCSNC. Positions 37-53 match the SCOOP motif motif; the sequence is SSEWRRKMITVWSKSSY. The SxS motif essential for MIK2 binding motif lies at 49–51; that stretch reads SKS.

It belongs to the serine rich endogenous peptide (SCOOP) phytocytokine family. In terms of assembly, interacts with MIK2 (via extracellular leucine-rich repeat domain); this interaction triggers the formation of complex between MIK2 and the BAK1/SERK3 and SERK4 coreceptors, and subsequent BAK1 activation by phosphorylation.

It localises to the cell membrane. The protein resides in the secreted. Its subcellular location is the extracellular space. It is found in the apoplast. In terms of biological role, brassicaceae-specific phytocytokine (plant endogenous peptide released into the apoplast) perceived by MIK2 in a BAK1/SERK3 and SERK4 coreceptors-dependent manner, that modulates various physiological and antimicrobial processes including growth prevention and reactive oxygen species (ROS) response regulation. This is Serine rich endogenous peptide 3 from Arabidopsis thaliana (Mouse-ear cress).